A 499-amino-acid chain; its full sequence is Lysine--tRNA ligase (499 aa).

E408 and E415 together coordinate Mg(2+).

The protein belongs to the class-II aminoacyl-tRNA synthetase family. Homodimer. Requires Mg(2+) as cofactor.

It localises to the cytoplasm. The catalysed reaction is tRNA(Lys) + L-lysine + ATP = L-lysyl-tRNA(Lys) + AMP + diphosphate. The sequence is that of Lysine--tRNA ligase from Bacillus cereus (strain AH820).